The chain runs to 834 residues: Leucine--tRNA ligase (834 aa).

The 'HIGH' region motif lies at 40 to 50 (PYPSGNIHMGH). Residues 586–590 (KMSKS) carry the 'KMSKS' region motif. Position 589 (lysine 589) interacts with ATP.

It belongs to the class-I aminoacyl-tRNA synthetase family.

Its subcellular location is the cytoplasm. It carries out the reaction tRNA(Leu) + L-leucine + ATP = L-leucyl-tRNA(Leu) + AMP + diphosphate. This is Leucine--tRNA ligase from Nitratidesulfovibrio vulgaris (strain DSM 19637 / Miyazaki F) (Desulfovibrio vulgaris).